Here is a 484-residue protein sequence, read N- to C-terminus: Siroheme synthase 1 (484 aa).

Residues 1–205 (MHHYPIFLKL…GREAEGEAEL (205 aa)) form a precorrin-2 dehydrogenase /sirohydrochlorin ferrochelatase region. NAD(+) contacts are provided by residues 22–23 (EA) and 43–44 (PV). Phosphoserine is present on S130. The segment at 220-484 (GEVFLVGAGP…DPCWTGGMRD (265 aa)) is uroporphyrinogen-III C-methyltransferase. P229 serves as a coordination point for S-adenosyl-L-methionine. The active-site Proton acceptor is D252. The Proton donor role is filled by K274. Residues 305–307 (GGD), L310, 335–336 (SA), M387, and A416 contribute to the S-adenosyl-L-methionine site.

This sequence in the N-terminal section; belongs to the precorrin-2 dehydrogenase / sirohydrochlorin ferrochelatase family. It in the C-terminal section; belongs to the precorrin methyltransferase family.

The catalysed reaction is uroporphyrinogen III + 2 S-adenosyl-L-methionine = precorrin-2 + 2 S-adenosyl-L-homocysteine + H(+). It catalyses the reaction precorrin-2 + NAD(+) = sirohydrochlorin + NADH + 2 H(+). The enzyme catalyses siroheme + 2 H(+) = sirohydrochlorin + Fe(2+). The protein operates within cofactor biosynthesis; adenosylcobalamin biosynthesis; precorrin-2 from uroporphyrinogen III: step 1/1. It functions in the pathway cofactor biosynthesis; adenosylcobalamin biosynthesis; sirohydrochlorin from precorrin-2: step 1/1. It participates in porphyrin-containing compound metabolism; siroheme biosynthesis; precorrin-2 from uroporphyrinogen III: step 1/1. Its pathway is porphyrin-containing compound metabolism; siroheme biosynthesis; siroheme from sirohydrochlorin: step 1/1. The protein operates within porphyrin-containing compound metabolism; siroheme biosynthesis; sirohydrochlorin from precorrin-2: step 1/1. In terms of biological role, multifunctional enzyme that catalyzes the SAM-dependent methylations of uroporphyrinogen III at position C-2 and C-7 to form precorrin-2 via precorrin-1. Then it catalyzes the NAD-dependent ring dehydrogenation of precorrin-2 to yield sirohydrochlorin. Finally, it catalyzes the ferrochelation of sirohydrochlorin to yield siroheme. The chain is Siroheme synthase 1 from Halorhodospira halophila (strain DSM 244 / SL1) (Ectothiorhodospira halophila (strain DSM 244 / SL1)).